Here is a 219-residue protein sequence, read N- to C-terminus: uncharacterized protein (219 aa).

2 helical membrane-spanning segments follow: residues 8–28 (MILF…TLSV) and 194–214 (GIPG…GLLF).

The protein resides in the cell membrane. This is an uncharacterized protein from Archaeoglobus fulgidus (strain ATCC 49558 / DSM 4304 / JCM 9628 / NBRC 100126 / VC-16).